We begin with the raw amino-acid sequence, 598 residues long: UvrABC system protein C (598 aa).

Residues 14–91 (DQPGCYLMKD…IHKNNPKYNI (78 aa)) form the GIY-YIG domain. One can recognise a UVR domain in the interval 196 to 231 (TEIQDRLQEKMAYAAAHMEFEKAAEFRDQIKAIETV).

It belongs to the UvrC family. As to quaternary structure, interacts with UvrB in an incision complex.

It is found in the cytoplasm. Functionally, the UvrABC repair system catalyzes the recognition and processing of DNA lesions. UvrC both incises the 5' and 3' sides of the lesion. The N-terminal half is responsible for the 3' incision and the C-terminal half is responsible for the 5' incision. In Enterococcus faecalis (strain ATCC 700802 / V583), this protein is UvrABC system protein C.